The following is a 97-amino-acid chain: Large ribosomal subunit protein bL28 (97 aa).

Belongs to the bacterial ribosomal protein bL28 family.

This Rickettsia typhi (strain ATCC VR-144 / Wilmington) protein is Large ribosomal subunit protein bL28.